Here is a 449-residue protein sequence, read N- to C-terminus: Signal recognition particle protein (449 aa).

Residues 109-116 (GLQGSGKT), 191-195 (DTAGR), and 249-252 (SRID) contribute to the GTP site.

This sequence belongs to the GTP-binding SRP family. SRP54 subfamily. In terms of assembly, part of the signal recognition particle protein translocation system, which is composed of SRP and FtsY. SRP is a ribonucleoprotein composed of Ffh and a 4.5S RNA molecule.

The protein resides in the cytoplasm. It carries out the reaction GTP + H2O = GDP + phosphate + H(+). Functionally, involved in targeting and insertion of nascent membrane proteins into the cytoplasmic membrane. Binds to the hydrophobic signal sequence of the ribosome-nascent chain (RNC) as it emerges from the ribosomes. The SRP-RNC complex is then targeted to the cytoplasmic membrane where it interacts with the SRP receptor FtsY. Interaction with FtsY leads to the transfer of the RNC complex to the Sec translocase for insertion into the membrane, the hydrolysis of GTP by both Ffh and FtsY, and the dissociation of the SRP-FtsY complex into the individual components. This chain is Signal recognition particle protein, found in Rickettsia conorii (strain ATCC VR-613 / Malish 7).